The following is a 330-amino-acid chain: ADP-L-glycero-D-manno-heptose-6-epimerase (330 aa).

Residues phenylalanine 11–isoleucine 12, aspartate 32–asparagine 33, lysine 39, lysine 54, glutamate 75–serine 79, and asparagine 92 each bind NADP(+). Tyrosine 139 (proton acceptor) is an active-site residue. Lysine 143 is an NADP(+) binding site. Asparagine 168 contacts substrate. The NADP(+) site is built by valine 169 and lysine 177. Catalysis depends on lysine 177, which acts as the Proton acceptor. Residues arginine 179, histidine 186, phenylalanine 200–tyrosine 203, arginine 213, and tyrosine 292 contribute to the substrate site.

It belongs to the NAD(P)-dependent epimerase/dehydratase family. HldD subfamily. As to quaternary structure, homopentamer. The cofactor is NADP(+).

It catalyses the reaction ADP-D-glycero-beta-D-manno-heptose = ADP-L-glycero-beta-D-manno-heptose. It participates in nucleotide-sugar biosynthesis; ADP-L-glycero-beta-D-manno-heptose biosynthesis; ADP-L-glycero-beta-D-manno-heptose from D-glycero-beta-D-manno-heptose 7-phosphate: step 4/4. In terms of biological role, catalyzes the interconversion between ADP-D-glycero-beta-D-manno-heptose and ADP-L-glycero-beta-D-manno-heptose via an epimerization at carbon 6 of the heptose. The protein is ADP-L-glycero-D-manno-heptose-6-epimerase of Paraburkholderia xenovorans (strain LB400).